The sequence spans 139 residues: Acidic phospholipase A2 Ts-A4 (139 aa).

A signal peptide spans 1 to 16; sequence MRTLWILAVLLVGVEG. Disulfide bonds link cysteine 42-cysteine 132, cysteine 44-cysteine 60, cysteine 59-cysteine 111, cysteine 65-cysteine 139, cysteine 66-cysteine 104, cysteine 73-cysteine 97, and cysteine 91-cysteine 102. Ca(2+) contacts are provided by tyrosine 43, glycine 45, and glycine 47. Histidine 63 is a catalytic residue. Aspartate 64 is a binding site for Ca(2+). The active site involves aspartate 105.

It depends on Ca(2+) as a cofactor. Expressed by the venom gland.

The protein resides in the secreted. It catalyses the reaction a 1,2-diacyl-sn-glycero-3-phosphocholine + H2O = a 1-acyl-sn-glycero-3-phosphocholine + a fatty acid + H(+). Functionally, PLA2 catalyzes the calcium-dependent hydrolysis of the 2-acyl groups in 3-sn-phosphoglycerides. In Trimeresurus stejnegeri (Chinese green tree viper), this protein is Acidic phospholipase A2 Ts-A4.